Consider the following 2455-residue polypeptide: Ectopic P granules protein 5 homolog (2455 aa).

Residues Met1–Asn42 form a disordered region. A Phosphoserine modification is found at Ser44. The interval Val77 to Thr105 is disordered. Low complexity predominate over residues Gln80–Ala97. Ser467 is modified (phosphoserine).

Belongs to the EPG5 family.

The protein resides in the cytoplasm. It localises to the perinuclear region. The protein localises to the lysosome. Functionally, involved in autophagy. Plays a role in late steps of autophagy. The chain is Ectopic P granules protein 5 homolog from Drosophila melanogaster (Fruit fly).